Reading from the N-terminus, the 389-residue chain is F-box protein At3g19880 (389 aa).

One can recognise an F-box domain in the interval 2–49 (TMMSDLTQDLVEEILSRVPITSLGAVRSTCKGWNALSKERILCIGEPK).

The chain is F-box protein At3g19880 from Arabidopsis thaliana (Mouse-ear cress).